The following is a 37-amino-acid chain: Large ribosomal subunit protein bL36 (37 aa).

The protein belongs to the bacterial ribosomal protein bL36 family.

The sequence is that of Large ribosomal subunit protein bL36 from Geobacter sp. (strain M21).